The chain runs to 484 residues: Acid alpha-amylase (484 aa).

A glycan (N-linked (GlcNAc...) asparagine) is linked at asparagine 24. The cysteines at positions 30 and 38 are disulfide-linked. Tryptophan 83 serves as a coordination point for substrate. A Ca(2+)-binding site is contributed by aspartate 121. Residue histidine 122 coordinates substrate. A disulfide bridge connects residues cysteine 150 and cysteine 164. A glycan (N-linked (GlcNAc...) asparagine) is linked at asparagine 157. Ca(2+) contacts are provided by glutamate 162 and aspartate 175. N-linked (GlcNAc...) asparagine glycosylation occurs at asparagine 197. Arginine 204 is a binding site for substrate. Ca(2+) contacts are provided by aspartate 206, glutamate 210, and glutamate 230. The Nucleophile role is filled by aspartate 206. 209-210 (LE) is a substrate binding site. The active-site Proton donor is the glutamate 230. Substrate is bound at residue glycine 234. Cysteines 240 and 283 form a disulfide. Aspartate 297 and arginine 344 together coordinate substrate. A disulfide bond links cysteine 440 and cysteine 475.

It belongs to the glycosyl hydrolase 13 family. As to quaternary structure, monomer. Ca(2+) serves as cofactor.

It is found in the secreted. The enzyme catalyses Endohydrolysis of (1-&gt;4)-alpha-D-glucosidic linkages in polysaccharides containing three or more (1-&gt;4)-alpha-linked D-glucose units.. The protein is Acid alpha-amylase of Aspergillus niger.